A 973-amino-acid chain; its full sequence is MYNMRRLSLSPTFSMGFHLLVTVSLLFSHVDHVIAETEMEGEGNETGECTGSYYCKKGVILPIWEPQDPSFGDKIARATVYFVAMVYMFLGVSIIADRFMSSIEVITSQEKEITIKKPNGETTKTTVRIWNETVSNLTLMALGSSAPEILLSVIEVCGHNFTAGDLGPSTIVGSAAFNMFIIIALCVYVVPDGETRKIKHLRVFFVTAAWSIFAYTWLYIILSVISPGVVEVWEGLLTFFFFPICVVFAWVADRRLLFYKYVYKRYRAGKQRGMIIEHEGDRPSSKTEIEMDGKVVNSHVENFLDGALVLEVDERDQDDEEARREMARILKELKQKHPDKEIEQLIELANYQVLSQQQKSRAFYRIQATRLMTGAGNILKRHAADQARKAVSMHEVNTEVTENDPVSKIFFEQGTYQCLENCGTVALTIIRRGGDLTNTVFVDFRTEDGTANAGSDYEFTEGTVVFKPGDTQKEIRVGIIDDDIFEEDENFLVHLSNVKVSSEASEDGILEANHVSTLACLGSPSTATVTIFDDDHAGIFTFEEPVTHVSESIGIMEVKVLRTSGARGNVIVPYKTIEGTARGGGEDFEDTCGELEFQNDEIVKTISVKVIDDEEYEKNKTFFLEIGEPRLVEMSEKKALLLNELGGFTITGKYLFGQPVFRKVHAREHPILSTVITIADEYDDKQPLTSKEEEERRIAEMGRPILGEHTKLEVIIEESYEFKSTVDKLIKKTNLALVVGTNSWREQFIEAITVSAGEDDDDDECGEEKLPSCFDYVMHFLTVFWKVLFAFVPPTEYWNGWACFIVSILMIGLLTAFIGDLASHFGCTIGLKDSVTAVVFVALGTSVPDTFASKVAATQDQYADASIGNVTGSNAVNVFLGIGVAWSIAAIYHAANGEQFKVSPGTLAFSVTLFTIFAFINVGVLLYRRRPEIGGELGGPRTAKLLTSCLFVLLWLLYIFFSSLEAYCHIKGF.

The first 35 residues, 1–35 (MYNMRRLSLSPTFSMGFHLLVTVSLLFSHVDHVIA), serve as a signal peptide directing secretion. Topologically, residues 36–74 (ETEMEGEGNETGECTGSYYCKKGVILPIWEPQDPSFGDK) are extracellular. Asparagine 44 is a glycosylation site (N-linked (GlcNAc...) asparagine). The chain crosses the membrane as a helical span at residues 75-95 (IARATVYFVAMVYMFLGVSII). Residues 96–136 (ADRFMSSIEVITSQEKEITIKKPNGETTKTTVRIWNETVSN) lie on the Cytoplasmic side of the membrane. The helical transmembrane segment at 137-157 (LTLMALGSSAPEILLSVIEVC) threads the bilayer. The Alpha-1 repeat unit spans residues 141 to 181 (ALGSSAPEILLSVIEVCGHNFTAGDLGPSTIVGSAAFNMFI). Over 158-170 (GHNFTAGDLGPST) the chain is Extracellular. An N-linked (GlcNAc...) asparagine glycan is attached at asparagine 160. A helical membrane pass occupies residues 171–191 (IVGSAAFNMFIIIALCVYVVP). The Cytoplasmic portion of the chain corresponds to 192-204 (DGETRKIKHLRVF). A helical transmembrane segment spans residues 205–225 (FVTAAWSIFAYTWLYIILSVI). Over 226–231 (SPGVVE) the chain is Extracellular. A helical membrane pass occupies residues 232 to 252 (VWEGLLTFFFFPICVVFAWVA). Residues 253–800 (DRRLLFYKYV…FVPPTEYWNG (548 aa)) lie on the Cytoplasmic side of the membrane. Residues 254-273 (RRLLFYKYVYKRYRAGKQRG) form a putative calmodulin-binding region region. A phosphoserine mark is found at serine 285 and serine 392. 2 consecutive Calx-beta domains span residues 396-496 (VNTE…VHLS) and 527-627 (ATVT…LEIG). Ca(2+) contacts are provided by glutamate 420, aspartate 456, aspartate 481, aspartate 482, isoleucine 484, glutamate 486, glutamate 489, aspartate 533, aspartate 534, aspartate 535, glutamate 551, aspartate 587, aspartate 613, glutamate 614, glutamate 615, and glutamate 718. Residues 801–821 (WACFIVSILMIGLLTAFIGDL) form a helical membrane-spanning segment. At 822–824 (ASH) the chain is on the extracellular side. The helical transmembrane segment at 825–845 (FGCTIGLKDSVTAVVFVALGT) threads the bilayer. Residues 842-878 (ALGTSVPDTFASKVAATQDQYADASIGNVTGSNAVNV) form an Alpha-2 repeat. At 846 to 874 (SVPDTFASKVAATQDQYADASIGNVTGSN) the chain is on the cytoplasmic side. Residues 875-895 (AVNVFLGIGVAWSIAAIYHAA) traverse the membrane as a helical segment. Topologically, residues 896–906 (NGEQFKVSPGT) are extracellular. The chain crosses the membrane as a helical span at residues 907 to 927 (LAFSVTLFTIFAFINVGVLLY). Residues 928–944 (RRRPEIGGELGGPRTAK) are Cytoplasmic-facing. A helical membrane pass occupies residues 945 to 965 (LLTSCLFVLLWLLYIFFSSLE). Residues 966–973 (AYCHIKGF) are Extracellular-facing.

It belongs to the Ca(2+):cation antiporter (CaCA) (TC 2.A.19) family. SLC8 subfamily. In terms of tissue distribution, detected primarily in heart and at lower levels in brain. Expressed in cardiac sarcolemma, brain, kidney, liver, pancreas, skeletal muscle, placenta and lung.

It is found in the cell membrane. The enzyme catalyses Ca(2+)(in) + 3 Na(+)(out) = Ca(2+)(out) + 3 Na(+)(in). With respect to regulation, activated by micromolar levels of Ca(2+). Mediates the exchange of one Ca(2+) ion against three to four Na(+) ions across the cell membrane, and thereby contributes to the regulation of cytoplasmic Ca(2+) levels and Ca(2+)-dependent cellular processes. Contributes to Ca(2+) transport during excitation-contraction coupling in muscle. In a first phase, voltage-gated channels mediate the rapid increase of cytoplasmic Ca(2+) levels due to release of Ca(2+) stores from the endoplasmic reticulum. SLC8A1 mediates the export of Ca(2+) from the cell during the next phase, so that cytoplasmic Ca(2+) levels rapidly return to baseline. Required for normal embryonic heart development and the onset of heart contractions. The chain is Sodium/calcium exchanger 1 (SLC8A1) from Homo sapiens (Human).